We begin with the raw amino-acid sequence, 176 residues long: uncharacterized protein (176 aa).

An N-terminal signal peptide occupies residues 1–22; sequence MKYNNIIFLGLCLGLTTYSALS. Cys38 and Cys78 are disulfide-bonded.

The protein belongs to the fimbrial protein family.

Its subcellular location is the fimbrium. This is an uncharacterized protein from Escherichia coli (strain K12).